We begin with the raw amino-acid sequence, 182 residues long: Transcriptional repressor NrdR (182 aa).

The segment at 1–24 is disordered; sequence MRCPYCGGLDTQVRDSRPTEDNTA. A zinc finger spans residues 3–34; that stretch reads CPYCGGLDTQVRDSRPTEDNTAIRRRRICPDC. Over residues 12 to 24 the composition is skewed to basic and acidic residues; that stretch reads QVRDSRPTEDNTA. The region spanning 49–139 is the ATP-cone domain; that stretch reads LMVLKRSGRR…VYRNFREAKD (91 aa). Residues 146–182 form a disordered region; sequence ELSQPELAQSDDVKAEGGAEGGRDKPKAAGKPPRSAE. Positions 156 to 172 are enriched in basic and acidic residues; that stretch reads DDVKAEGGAEGGRDKPK.

It belongs to the NrdR family. Zn(2+) serves as cofactor.

In terms of biological role, negatively regulates transcription of bacterial ribonucleotide reductase nrd genes and operons by binding to NrdR-boxes. In Xanthobacter autotrophicus (strain ATCC BAA-1158 / Py2), this protein is Transcriptional repressor NrdR.